A 230-amino-acid polypeptide reads, in one-letter code: C-methyltransferase CouO (230 aa).

This sequence belongs to the methyltransferase superfamily.

It participates in antibiotic biosynthesis. Its function is as follows. Mediates C-methylation at the 8-position of the aminocoumarin moieties in coumermycin A1 in the biosynthetic pathway of coumermycin antibiotic. Active on both mono- and bis-amides for mono- and di-C-methylation adjacent to the phenolic hydroxyl before it is glycosylated by CouM. The polypeptide is C-methyltransferase CouO (couO) (Streptomyces rishiriensis).